A 485-amino-acid polypeptide reads, in one-letter code: Pup--protein ligase (485 aa).

Glu-33 provides a ligand contact to Mg(2+). Residue Arg-76 participates in ATP binding. Tyr-78 contributes to the Mg(2+) binding site. Asp-80 acts as the Proton acceptor in catalysis. Glu-86 contributes to the Mg(2+) binding site. The ATP site is built by Thr-89 and Trp-451.

Belongs to the Pup ligase/Pup deamidase family. Pup-conjugating enzyme subfamily.

The catalysed reaction is ATP + [prokaryotic ubiquitin-like protein]-L-glutamate + [protein]-L-lysine = ADP + phosphate + N(6)-([prokaryotic ubiquitin-like protein]-gamma-L-glutamyl)-[protein]-L-lysine.. Its pathway is protein degradation; proteasomal Pup-dependent pathway. It participates in protein modification; protein pupylation. Catalyzes the covalent attachment of the prokaryotic ubiquitin-like protein modifier Pup to the proteasomal substrate proteins, thereby targeting them for proteasomal degradation. This tagging system is termed pupylation. The ligation reaction involves the side-chain carboxylate of the C-terminal glutamate of Pup and the side-chain amino group of a substrate lysine. The chain is Pup--protein ligase from Bifidobacterium longum subsp. infantis (strain ATCC 15697 / DSM 20088 / JCM 1222 / NCTC 11817 / S12).